We begin with the raw amino-acid sequence, 941 residues long: Probable lipoxygenase 8, chloroplastic (941 aa).

Disordered regions lie at residues 1-22 (MLRP…SSSS) and 45-68 (LIAG…VVRC). The N-terminal 67 residues, 1–67 (MLRPQLNPSS…QQGRQRVVVR (67 aa)), are a transit peptide targeting the chloroplast. One can recognise a PLAT domain in the interval 100-236 (AVATIKVTVE…SIDEGTPGKR (137 aa)). The region spanning 242–941 (AYLPGQTPAG…GMGIPNSTSI (700 aa)) is the Lipoxygenase domain. Disordered regions lie at residues 255–274 (YREE…READ) and 288–331 (NPDS…RKGN). Residues 319–331 (SKKDPKSETRKGN) are compositionally biased toward basic and acidic residues. Fe cation is bound by residues H598, H603, H790, N794, and I941.

This sequence belongs to the lipoxygenase family. The cofactor is Fe cation.

Its subcellular location is the plastid. The protein resides in the chloroplast. It carries out the reaction (9Z,12Z)-octadecadienoate + O2 = (13S)-hydroperoxy-(9Z,11E)-octadecadienoate. It catalyses the reaction (9Z,12Z,15Z)-octadecatrienoate + O2 = (13S)-hydroperoxy-(9Z,11E,15Z)-octadecatrienoate. It functions in the pathway lipid metabolism; oxylipin biosynthesis. Its function is as follows. Plant lipoxygenase may be involved in a number of diverse aspects of plant physiology including growth and development, pest resistance, and senescence or responses to wounding. It catalyzes the hydroperoxidation of lipids containing a cis,cis-1,4-pentadiene structure. This chain is Probable lipoxygenase 8, chloroplastic (CM-LOX2), found in Oryza sativa subsp. japonica (Rice).